The chain runs to 579 residues: Isocitrate dehydrogenase kinase/phosphatase (579 aa).

ATP contacts are provided by residues 324 to 330 (ADGTPGM) and Lys-345. Asp-380 is a catalytic residue.

Belongs to the AceK family.

The protein localises to the cytoplasm. The enzyme catalyses L-seryl-[isocitrate dehydrogenase] + ATP = O-phospho-L-seryl-[isocitrate dehydrogenase] + ADP + H(+). Its function is as follows. Bifunctional enzyme which can phosphorylate or dephosphorylate isocitrate dehydrogenase (IDH) on a specific serine residue. This is a regulatory mechanism which enables bacteria to bypass the Krebs cycle via the glyoxylate shunt in response to the source of carbon. When bacteria are grown on glucose, IDH is fully active and unphosphorylated, but when grown on acetate or ethanol, the activity of IDH declines drastically concomitant with its phosphorylation. The sequence is that of Isocitrate dehydrogenase kinase/phosphatase from Xanthomonas axonopodis pv. citri (strain 306).